A 600-amino-acid polypeptide reads, in one-letter code: NADH-quinone oxidoreductase subunit C/D (600 aa).

An NADH dehydrogenase I subunit C region spans residues 1 to 190 (MVNNMTDLTA…DPFELTKAKQ (190 aa)). An NADH dehydrogenase I subunit D region spans residues 214-600 (DFMFLNLGPN…IDFVMSDVDR (387 aa)).

The protein in the N-terminal section; belongs to the complex I 30 kDa subunit family. In the C-terminal section; belongs to the complex I 49 kDa subunit family. As to quaternary structure, NDH-1 is composed of 13 different subunits. Subunits NuoB, CD, E, F, and G constitute the peripheral sector of the complex.

The protein resides in the cell inner membrane. The catalysed reaction is a quinone + NADH + 5 H(+)(in) = a quinol + NAD(+) + 4 H(+)(out). Its function is as follows. NDH-1 shuttles electrons from NADH, via FMN and iron-sulfur (Fe-S) centers, to quinones in the respiratory chain. The immediate electron acceptor for the enzyme in this species is believed to be ubiquinone. Couples the redox reaction to proton translocation (for every two electrons transferred, four hydrogen ions are translocated across the cytoplasmic membrane), and thus conserves the redox energy in a proton gradient. This chain is NADH-quinone oxidoreductase subunit C/D, found in Citrobacter koseri (strain ATCC BAA-895 / CDC 4225-83 / SGSC4696).